A 256-amino-acid polypeptide reads, in one-letter code: UPF0644 protein PB2B4.06 (256 aa).

The chain crosses the membrane as a helical span at residues 34-56; it reads GVVYAGVSGTCAAAGYMFGNFVM.

Belongs to the UPF0644 family.

The protein resides in the mitochondrion membrane. This Schizosaccharomyces pombe (strain 972 / ATCC 24843) (Fission yeast) protein is UPF0644 protein PB2B4.06.